The sequence spans 88 residues: LYR motif-containing protein 2 (88 aa).

Residues 1–19 constitute a mitochondrion transit peptide; the sequence is MAASRLPPATLTLKQFVRR.

The protein belongs to the complex I LYR family.

The protein resides in the mitochondrion. Functionally, involved in efficient integration of the N-module into mitochondrial respiratory chain complex I. This Homo sapiens (Human) protein is LYR motif-containing protein 2 (LYRM2).